The following is a 250-amino-acid chain: tRNA (guanine-N(1)-)-methyltransferase (250 aa).

Residues glycine 116 and 136-141 (IGDYVL) contribute to the S-adenosyl-L-methionine site.

It belongs to the RNA methyltransferase TrmD family. Homodimer.

It is found in the cytoplasm. The enzyme catalyses guanosine(37) in tRNA + S-adenosyl-L-methionine = N(1)-methylguanosine(37) in tRNA + S-adenosyl-L-homocysteine + H(+). Functionally, specifically methylates guanosine-37 in various tRNAs. The protein is tRNA (guanine-N(1)-)-methyltransferase of Pseudomonas fluorescens (strain SBW25).